Consider the following 1044-residue polypeptide: Outer dynein arm-docking complex subunit 2 (1044 aa).

2 stretches are compositionally biased toward basic and acidic residues: residues 317-338 and 379-401; these read IKFS…EVAI and SKDR…EKSR. 2 disordered regions span residues 317 to 409 and 423 to 446; these read IKFS…PGRA and ISDS…ANAD. HEAT repeat units follow at residues 448-485, 487-527, 530-568, 627-665, and 668-706; these read PSEY…AQET, QLAI…NPQI, NIVD…FRRA, AIRK…EENY, and AIKA…DEET. ARM repeat units lie at residues 484–523, 525–564, 535–577, 622–661, 663–702, 746–785, 828–867, 871–910, 912–951, 953–992, and 1004–1031; these read ETCQ…EISH, PQIR…NVAK, GGLP…RHGG, YANK…ECAS, ENYR…QCAE, KENV…ECCQ, PESM…PCIQ, DAGE…NIAK, QENL…RCCM, GRNR…QLSE, and GAVK…ISNI. HEAT repeat units lie at residues 831 to 870, 874 to 914, 916 to 955, 958 to 996, and 999 to 1037; these read MMII…QNAK, EMVR…DQEN, AVIT…WGRN, AFGE…DADN, and TMHE…LALA.

In terms of assembly, component of the outer dynein arm-docking complex along with ODAD1, ODAD3, ODAD4 and CLXN. Interacts with CFAP61. Expressed in trachea multiciliated cells.

It is found in the cytoplasm. It localises to the cytoskeleton. The protein localises to the cilium axoneme. The protein resides in the cilium basal body. In terms of biological role, component of the outer dynein arm-docking complex (ODA-DC) that mediates outer dynein arms (ODA) binding onto the doublet microtubule. Involved in mediating assembly of both ODAs and their axonemal docking complex onto ciliary microtubules. In Bos taurus (Bovine), this protein is Outer dynein arm-docking complex subunit 2 (ODAD2).